Reading from the N-terminus, the 175-residue chain is Ribosome maturation factor RimM (175 aa).

The 75-residue stretch at glutamate 100–tryptophan 174 folds into the PRC barrel domain.

Belongs to the RimM family. In terms of assembly, binds ribosomal protein uS19.

The protein resides in the cytoplasm. Functionally, an accessory protein needed during the final step in the assembly of 30S ribosomal subunit, possibly for assembly of the head region. Essential for efficient processing of 16S rRNA. May be needed both before and after RbfA during the maturation of 16S rRNA. It has affinity for free ribosomal 30S subunits but not for 70S ribosomes. The protein is Ribosome maturation factor RimM of Buchnera aphidicola subsp. Schizaphis graminum (strain Sg).